The primary structure comprises 65 residues: Hirudin-2 (65 aa).

An interaction with thrombin active site region spans residues 1–3 (ITY). Cystine bridges form between C6–C14, C16–C28, and C22–C39. The disordered stretch occupies residues 39–65 (CVTGEGTPKPQSHNDGDFEEIPEEYLQ). A glycan (O-linked (GalNAc...) threonine) is linked at T45. Positions 55–65 (DFEEIPEEYLQ) are interaction with fibrinogen-binding exosite of thrombin. Acidic residues predominate over residues 55-65 (DFEEIPEEYLQ). A Sulfotyrosine modification is found at Y63.

This sequence belongs to the protease inhibitor I14 (hirudin) family.

It localises to the secreted. Its function is as follows. Hirudin is a potent thrombin-specific protease inhibitor. It forms a stable non-covalent complex with alpha-thrombin, thereby abolishing its ability to cleave fibrinogen. This chain is Hirudin-2, found in Hirudo medicinalis (Medicinal leech).